A 338-amino-acid chain; its full sequence is Anthranilate phosphoribosyltransferase (338 aa).

5-phospho-alpha-D-ribose 1-diphosphate is bound by residues Gly81, 84-85, Thr89, 91-94, 109-117, and Ala121; these read GD, NIST, and KHGNRNLSS. Anthranilate is bound at residue Gly81. Ser93 contacts Mg(2+). An anthranilate-binding site is contributed by Asn112. Arg167 lines the anthranilate pocket. Positions 226 and 227 each coordinate Mg(2+).

Belongs to the anthranilate phosphoribosyltransferase family. As to quaternary structure, homodimer. The cofactor is Mg(2+).

The catalysed reaction is N-(5-phospho-beta-D-ribosyl)anthranilate + diphosphate = 5-phospho-alpha-D-ribose 1-diphosphate + anthranilate. It functions in the pathway amino-acid biosynthesis; L-tryptophan biosynthesis; L-tryptophan from chorismate: step 2/5. In terms of biological role, catalyzes the transfer of the phosphoribosyl group of 5-phosphorylribose-1-pyrophosphate (PRPP) to anthranilate to yield N-(5'-phosphoribosyl)-anthranilate (PRA). In Cereibacter sphaeroides (strain ATCC 17029 / ATH 2.4.9) (Rhodobacter sphaeroides), this protein is Anthranilate phosphoribosyltransferase.